The sequence spans 336 residues: Glycerol-3-phosphate dehydrogenase [NAD(P)+] (336 aa).

NADPH is bound by residues Ser11, Trp12, Arg32, and Lys109. Lys109, Gly140, and Ser142 together coordinate sn-glycerol 3-phosphate. Ala144 provides a ligand contact to NADPH. 5 residues coordinate sn-glycerol 3-phosphate: Lys195, Asp248, Ser258, Arg259, and Asn260. Lys195 (proton acceptor) is an active-site residue. Arg259 serves as a coordination point for NADPH. 2 residues coordinate NADPH: Val283 and Glu285.

This sequence belongs to the NAD-dependent glycerol-3-phosphate dehydrogenase family.

Its subcellular location is the cytoplasm. The enzyme catalyses sn-glycerol 3-phosphate + NAD(+) = dihydroxyacetone phosphate + NADH + H(+). It carries out the reaction sn-glycerol 3-phosphate + NADP(+) = dihydroxyacetone phosphate + NADPH + H(+). The protein operates within membrane lipid metabolism; glycerophospholipid metabolism. Its function is as follows. Catalyzes the reduction of the glycolytic intermediate dihydroxyacetone phosphate (DHAP) to sn-glycerol 3-phosphate (G3P), the key precursor for phospholipid synthesis. This chain is Glycerol-3-phosphate dehydrogenase [NAD(P)+], found in Leuconostoc mesenteroides subsp. mesenteroides (strain ATCC 8293 / DSM 20343 / BCRC 11652 / CCM 1803 / JCM 6124 / NCDO 523 / NBRC 100496 / NCIMB 8023 / NCTC 12954 / NRRL B-1118 / 37Y).